A 250-amino-acid polypeptide reads, in one-letter code: 2,3-bisphosphoglycerate-dependent phosphoglycerate mutase (250 aa).

Substrate is bound by residues 10-17 (RHGESEWN), 23-24 (TG), R62, 89-92 (ERHY), K100, 116-117 (RR), and 185-186 (GN). H11 acts as the Tele-phosphohistidine intermediate in catalysis. Residue E89 is the Proton donor/acceptor of the active site.

The protein belongs to the phosphoglycerate mutase family. BPG-dependent PGAM subfamily. As to quaternary structure, homodimer.

The catalysed reaction is (2R)-2-phosphoglycerate = (2R)-3-phosphoglycerate. It participates in carbohydrate degradation; glycolysis; pyruvate from D-glyceraldehyde 3-phosphate: step 3/5. Catalyzes the interconversion of 2-phosphoglycerate and 3-phosphoglycerate. This is 2,3-bisphosphoglycerate-dependent phosphoglycerate mutase from Edwardsiella ictaluri (strain 93-146).